A 1487-amino-acid polypeptide reads, in one-letter code: MPPQPPPAASASASAPDPAVPAWLRGLPRAPEYRPTESEFADPIAFLSRVEREAAAYGICKVIPPHPRPSRRFVFAHLNRSLVSSCDAPAPSPAAASDSSIPPSSSSPPPVSAAVFTTRHQELGNPRRGRPTPQVLKQVWQSGERYTLDQFESKSRAFSKTHLAGLHEPTALAVESLFWKASADRPIYIEYANDVPGSGFAAPVQLQRKKKQKRETAPMDEWEKSSGWRLSNSPWNLQAIARAPGSLTRFMPDDVPGVTSPMVYIGMLFSWFAWHVEDHDLHSLNFLHTGAPKTWYAVPGDRAVELEEVIRVHGYGGNTDRIASLAVLGEKTTLMSPEVLIDNGVPCCRLVQYPGEFVVTFPRAYHVGFSHGFNCGEAANFATPQWLKFAKEAAVRRAVMNYLPMLSHQQLLYLLAVSFISRNPRELLSGIRTSRLRDRKKEDRELLVKQEFLQDMISENELICSFLGKKSVDNVVLWEPDLLPSLTALHPCSSCSKAPEKKGEDGPRIGSTQSSSKDDSSSDGTACMTGTQSKGLSMDSKQAPEGEKLDTDDGDDLPFDLSIDSGSLTCVACGILGYPFMAILQPSRKALEEISLVDKERYKLSCEKEICSNVLPCSPNDGSSGCPLIANRSSSPVENANLSHQDVKPIRSDISLMGKEFNGTLGKHIGTSCSCSSENTIHPYGDTETPEKKIPSDCPGSELSKQSGRGDVNVPDVEGSEETISWNTGCAFARPRIFCLQHALEIEELLASKGGVHALIICHADYVKLKALAISIAEEIEFQFDYKDVALANASKSNLHLINISIDDEGYEEEGTDWTSRMGLNLKHSSKIRKETPESQEQPPLSFWGLFSKPSPISVVSNLKWLCRKARTPYKVIGYASSPDVVATPDKVKPAVTKTQIDTSGNAHENIGSEQTLQQDCVLQESNDVADMCKRPKVNDQDGHSLINIPIAVAEYPMMHQVCERPVSVSACDDPICSFDSQDSPTTVAVSAGKPTREQCGAESTELSTVKQFLDNGLIAEGGSMNFISNHEHLESDNATSVCKDEQLQVQQDQLAMVLCNNPNTELVAGELHGGAASSTLENEDSCGNTSYCSDTVLKNSEPDTDDQPETCDRSVVLVTPKSSCDQMISSSDRSCSLTLDCPVSTDAAFSSEKLSMAHDLMGSELQAVHNSKAEVVASLTDVKGAKLNSIHTTQLPHESPSSDFIISEGAQSASTTAIPRKNGTSMHTESNSIDILLGVLADESKVSSGKDEVGKASLTLMTLAGNDQSADDVTQDEVAEITDPSHGFCSSDIVSRSIGSSNRTNIICYARRKHKRKSGSEFNINSPQSLGSFVRSPCESLRPRTRPAIVEDMTNETKTAEASTANKRKKAKVEAFQCDIEFCDMTFETKAELRAHQRNICTDESCGKRFSSHKYLKRHQCVHRDERPFKCPWDGCPMTFKWLWAQTEHIRVHTGERPYKCSAPDCGQSFRYVSDYSRHRKKFNHY.

Residues 1-23 (MPPQPPPAASASASAPDPAVPAW) form a disordered region. The span at 9-22 (ASASASAPDPAVPA) shows a compositional bias: low complexity. Residues 30–71 (APEYRPTESEFADPIAFLSRVEREAAAYGICKVIPPHPRPSR) enclose the JmjN domain. Residues 86–104 (CDAPAPSPAAASDSSIPPS) are compositionally biased toward low complexity. The segment at 86–113 (CDAPAPSPAAASDSSIPPSSSSPPPVSA) is disordered. One can recognise a JmjC domain in the interval 232-398 (NSPWNLQAIA…FAKEAAVRRA (167 aa)). The Fe cation site is built by His275, Glu277, and His366. 2 disordered regions span residues 494–555 (SCSK…DDGD) and 684–718 (YGDTETPEKKIPSDCPGSELSKQSGRGDVNVPDVE). Composition is skewed to basic and acidic residues over residues 498–507 (APEKKGEDGP) and 542–551 (QAPEGEKLDT). Residues 1377-1400 (FQCDIEFCDMTFETKAELRAHQRN) form a C2H2-type 1; degenerate zinc finger. C2H2-type zinc fingers lie at residues 1400–1424 (NICTDESCGKRFSSHKYLKRHQCVH), 1430–1454 (FKCPWDGCPMTFKWLWAQTEHIRVH), and 1460–1486 (YKCSAPDCGQSFRYVSDYSRHRKKFNH).

Fe(2+) serves as cofactor.

It localises to the nucleus. In terms of biological role, histone demethylase that demethylates 'Lys-4' (H3K4me) of histone H3. Involved in the control of flowering time. Has a suppressive effect on floral transition under long day conditions through the demethylation of H3K4me3 in the promoter region of the flower-promoting signal HD3B/RFT1. This is Probable lysine-specific demethylase SE14 (SE14) from Oryza sativa subsp. japonica (Rice).